The sequence spans 213 residues: Endonuclease III (213 aa).

The HhH domain occupies 101–120 (LEELLKLPGVGRKTANIVLW). Cys-180, Cys-187, Cys-190, and Cys-196 together coordinate [4Fe-4S] cluster.

The protein belongs to the Nth/MutY family. The cofactor is [4Fe-4S] cluster.

It catalyses the reaction 2'-deoxyribonucleotide-(2'-deoxyribose 5'-phosphate)-2'-deoxyribonucleotide-DNA = a 3'-end 2'-deoxyribonucleotide-(2,3-dehydro-2,3-deoxyribose 5'-phosphate)-DNA + a 5'-end 5'-phospho-2'-deoxyribonucleoside-DNA + H(+). DNA repair enzyme that has both DNA N-glycosylase activity and AP-lyase activity. The DNA N-glycosylase activity releases various damaged pyrimidines from DNA by cleaving the N-glycosidic bond, leaving an AP (apurinic/apyrimidinic) site. The AP-lyase activity cleaves the phosphodiester bond 3' to the AP site by a beta-elimination, leaving a 3'-terminal unsaturated sugar and a product with a terminal 5'-phosphate. The polypeptide is Endonuclease III (Thermotoga maritima (strain ATCC 43589 / DSM 3109 / JCM 10099 / NBRC 100826 / MSB8)).